Here is a 294-residue protein sequence, read N- to C-terminus: Endolytic peptidoglycan transglycosylase RlpA (294 aa).

Positions M1–A23 are cleaved as a signal peptide. The SPOR domain maps to E216–T291.

This sequence belongs to the RlpA family.

Its function is as follows. Lytic transglycosylase with a strong preference for naked glycan strands that lack stem peptides. The chain is Endolytic peptidoglycan transglycosylase RlpA from Pasteurella multocida (strain Pm70).